An 84-amino-acid chain; its full sequence is Small ribosomal subunit protein uS17 (84 aa).

This sequence belongs to the universal ribosomal protein uS17 family. In terms of assembly, part of the 30S ribosomal subunit.

Functionally, one of the primary rRNA binding proteins, it binds specifically to the 5'-end of 16S ribosomal RNA. The protein is Small ribosomal subunit protein uS17 of Borreliella burgdorferi (strain ATCC 35210 / DSM 4680 / CIP 102532 / B31) (Borrelia burgdorferi).